Here is a 489-residue protein sequence, read N- to C-terminus: Cobyric acid synthase (489 aa).

The region spanning 251 to 439 (RLTVVAPVYP…LHGLFDTPAA (189 aa)) is the GATase cobBQ-type domain. C332 serves as the catalytic Nucleophile. The active site involves H431.

The protein belongs to the CobB/CobQ family. CobQ subfamily.

Its pathway is cofactor biosynthesis; adenosylcobalamin biosynthesis. Its function is as follows. Catalyzes amidations at positions B, D, E, and G on adenosylcobyrinic A,C-diamide. NH(2) groups are provided by glutamine, and one molecule of ATP is hydrogenolyzed for each amidation. In Aromatoleum aromaticum (strain DSM 19018 / LMG 30748 / EbN1) (Azoarcus sp. (strain EbN1)), this protein is Cobyric acid synthase.